Consider the following 281-residue polypeptide: 2,3,4,5-tetrahydropyridine-2,6-dicarboxylate N-succinyltransferase (281 aa).

Residues arginine 108 and aspartate 145 each contribute to the substrate site.

Belongs to the transferase hexapeptide repeat family. Homotrimer.

It is found in the cytoplasm. The enzyme catalyses (S)-2,3,4,5-tetrahydrodipicolinate + succinyl-CoA + H2O = (S)-2-succinylamino-6-oxoheptanedioate + CoA. Its pathway is amino-acid biosynthesis; L-lysine biosynthesis via DAP pathway; LL-2,6-diaminopimelate from (S)-tetrahydrodipicolinate (succinylase route): step 1/3. This Nitrobacter hamburgensis (strain DSM 10229 / NCIMB 13809 / X14) protein is 2,3,4,5-tetrahydropyridine-2,6-dicarboxylate N-succinyltransferase.